A 238-amino-acid polypeptide reads, in one-letter code: Small ribosomal subunit protein eS4 (238 aa).

In terms of domain architecture, S4 RNA-binding spans 38–109 (IPLALVIRDV…DERSYYALVP (72 aa)).

It belongs to the eukaryotic ribosomal protein eS4 family.

The polypeptide is Small ribosomal subunit protein eS4 (Pyrobaculum neutrophilum (strain DSM 2338 / JCM 9278 / NBRC 100436 / V24Sta) (Thermoproteus neutrophilus)).